A 528-amino-acid polypeptide reads, in one-letter code: Sodium-dependent lysophosphatidylcholine symporter 1 (528 aa).

Topologically, residues 1-37 (MAGGGGAERVRVGAAAAGLLPPSCRQPRRRESRERLS) are cytoplasmic. A helical membrane pass occupies residues 38 to 66 (VCSKLCYAVGGAPYQTTGCALGFFLQIYL). The Extracellular segment spans residues 67 to 73 (LDVAQLD). The chain crosses the membrane as a helical span at residues 74–99 (PFYASIILFVGRAWDAITDPMVGFFI). The Cytoplasmic portion of the chain corresponds to 100 to 109 (SKTPWTRFGR). Residues 110-129 (LMPWIIFSTPFAVISYFLIW) traverse the membrane as a helical segment. Residues 130–138 (FVPDISTGQ) lie on the Extracellular side of the membrane. A helical transmembrane segment spans residues 139-161 (VMWYLIFYCIFQTLVTCFHVPYS). The Cytoplasmic segment spans residues 162-176 (ALTMFISREQSERDS). The chain crosses the membrane as a helical span at residues 177–199 (ATAYRMTVEVLGTVLGTAIQGQI). At 200 to 241 (VGKAVTPCIENPPFLSETNFSVAIRNVNMTHYTGSLADTRNA) the chain is on the extracellular side. Cysteine 207 and cysteine 460 form a disulfide bridge. Residues asparagine 218 and asparagine 227 are each glycosylated (N-linked (GlcNAc...) asparagine). Residues 242-263 (YMVAAGVIGGLYILCAVILSVG) traverse the membrane as a helical segment. Over 264 to 295 (VREKRESSELQSDEPVSFFRGLKLVMNHGAYI) the chain is Cytoplasmic. The chain crosses the membrane as a helical span at residues 296–319 (KLITGFLFTSLAFMLLEGNFALFC). The Extracellular portion of the chain corresponds to 320–328 (TYTLGFRNE). A helical transmembrane segment spans residues 329–351 (FQNILLAIMLSATLTIPFWQWFL). Topologically, residues 352–355 (TRFG) are cytoplasmic. Residues 356 to 376 (KKTAVYVGISSAVPFLITVVV) traverse the membrane as a helical segment. Residues 377-381 (LDSNL) lie on the Extracellular side of the membrane. The helical transmembrane segment at 382-404 (VVTYIVAVAAGISVAAAFLLPWS) threads the bilayer. Over 405-427 (MLPDVIDDFKLQHPESRGHEAIF) the chain is Cytoplasmic. The helical transmembrane segment at 428–450 (FSFYVFFTKFTSGVSLGISTLSL) threads the bilayer. Residues 451 to 467 (DFAGYQTRGCSQPSEVN) lie on the Extracellular side of the membrane. The helical transmembrane segment at 468-490 (ITLKLLVSAVPVGLILLGLLLFK) threads the bilayer. The Cytoplasmic portion of the chain corresponds to 491 to 528 (LYPIDEEKRRENKKALQDLREESNSSSESDSTELANIV). Residues 503-513 (KKALQDLREES) show a composition bias toward basic and acidic residues. Residues 503–528 (KKALQDLREESNSSSESDSTELANIV) form a disordered region. A compositionally biased stretch (low complexity) spans 514-528 (NSSSESDSTELANIV).

This sequence belongs to the major facilitator superfamily.

The protein localises to the cell membrane. It localises to the endoplasmic reticulum membrane. It carries out the reaction a 1-acyl-sn-glycero-3-phosphocholine(in) + Na(+)(in) = a 1-acyl-sn-glycero-3-phosphocholine(out) + Na(+)(out). It catalyses the reaction 1-(4Z,7Z,10Z,13Z,16Z,19Z-docosahexaenoyl)-sn-glycero-3-phosphocholine(in) + Na(+)(in) = 1-(4Z,7Z,10Z,13Z,16Z,19Z-docosahexaenoyl)-sn-glycero-3-phosphocholine(out) + Na(+)(out). The enzyme catalyses 1-(9Z-octadecenoyl)-sn-glycero-3-phosphocholine(in) + Na(+)(in) = 1-(9Z-octadecenoyl)-sn-glycero-3-phosphocholine(out) + Na(+)(out). The catalysed reaction is 1-hexadecanoyl-sn-glycero-3-phosphocholine(in) + Na(+)(in) = 1-hexadecanoyl-sn-glycero-3-phosphocholine(out) + Na(+)(out). It carries out the reaction a 1-acyl-sn-glycero-3-phosphoethanolamine(in) + Na(+)(in) = a 1-acyl-sn-glycero-3-phosphoethanolamine(out) + Na(+)(out). Functionally, sodium-dependent lysophosphatidylcholine (LPC) symporter, which plays an essential role for blood-brain barrier formation and function. Specifically expressed in endothelium of the blood-brain barrier of micro-vessels and transports LPC into the brain. Transport of LPC is essential because it constitutes the major mechanism by which docosahexaenoic acid (DHA), an omega-3 fatty acid that is essential for normal brain growth and cognitive function, enters the brain. Transports LPC carrying long-chain fatty acids such LPC oleate and LPC palmitate with a minimum acyl chain length of 14 carbons. Does not transport docosahexaenoic acid in unesterified fatty acid. The chain is Sodium-dependent lysophosphatidylcholine symporter 1 from Gallus gallus (Chicken).